The chain runs to 124 residues: Phycocyanin PC645 alpha-3 subunit (124 aa).

Arg71 lines the (2R,3E)-phycocyanobilin pocket. Positions 73, 81, and 97 each coordinate mesobiliverdin.

It belongs to the phycoerythrin family. Heterotetramer of 2 different alpha chains and 2 identical beta chains which form 2 alpha-beta heterodimers within the heterotetramer. Post-translationally, contains one phycocyanobilin chromophore and one mesobiliverdin chromophore with binding mediated by both the alpha and beta subunits.

The protein localises to the plastid. The protein resides in the chloroplast thylakoid membrane. Light-harvesting photosynthetic tetrapyrrole chromophore-protein from the phycobiliprotein complex. The chain is Phycocyanin PC645 alpha-3 subunit from Chroomonas sp. (strain CCMP270).